Consider the following 338-residue polypeptide: MSTLRLLISDSYDPWFNLAVEECIFRQMPATQRVLFLWRNADTVVIGRAQNPWKECNTRRMEEDNVRLARRSSGGGAVFHDLGNTCFTFMAGKPEYDKTISTSIVLNALNALGVSAEASGRNDLVVKTAEGDRKVSGSAYRETKDRGFHHGTLLLNADLSRLANYLNPDKKKLAAKGITSVRSRVTNLTELLPGITHEQVCEAITKAFFAHYGERVEAEIISPDKTPDLPNFAEIFARQSSWEWNFGQAPAFSHLLDERFSWGGVELHFDVEKGHITRAQVFTDSLNPAPLEALAGRLQGGLYRADMLQQECEALLVDFPDQEKELRELSTWIAGAVR.

Residues 29–216 enclose the BPL/LPL catalytic domain; it reads PATQRVLFLW…AFFAHYGERV (188 aa). ATP-binding positions include Arg-71, 76 to 79, and Lys-134; that span reads GAVF. Lys-134 lines the (R)-lipoate pocket.

The protein belongs to the LplA family. As to quaternary structure, monomer.

The protein localises to the cytoplasm. The catalysed reaction is L-lysyl-[lipoyl-carrier protein] + (R)-lipoate + ATP = N(6)-[(R)-lipoyl]-L-lysyl-[lipoyl-carrier protein] + AMP + diphosphate + H(+). The protein operates within protein modification; protein lipoylation via exogenous pathway; protein N(6)-(lipoyl)lysine from lipoate: step 1/2. Its pathway is protein modification; protein lipoylation via exogenous pathway; protein N(6)-(lipoyl)lysine from lipoate: step 2/2. Catalyzes both the ATP-dependent activation of exogenously supplied lipoate to lipoyl-AMP and the transfer of the activated lipoyl onto the lipoyl domains of lipoate-dependent enzymes. The protein is Lipoate-protein ligase A of Escherichia coli O8 (strain IAI1).